The primary structure comprises 123 residues: Large ribosomal subunit protein uL18 (123 aa).

It belongs to the universal ribosomal protein uL18 family. In terms of assembly, part of the 50S ribosomal subunit; part of the 5S rRNA/L5/L18/L25 subcomplex. Contacts the 5S and 23S rRNAs.

Functionally, this is one of the proteins that bind and probably mediate the attachment of the 5S RNA into the large ribosomal subunit, where it forms part of the central protuberance. The protein is Large ribosomal subunit protein uL18 of Chlamydia muridarum (strain MoPn / Nigg).